Consider the following 257-residue polypeptide: MIHLKRPNSPSKLINEEAKLTQEFLQNGNSVWGKPYIKLALLEMSNNKCVYCECRLDEESKYMEVEHFLPKDTYPNLVVNWRNLLPSCKRCNGKKGTHDSKKEPIINPTVDTPSNHIKMFNYCLKGKDLKGKTTVDVLHLNQLDRLVYPRMLIGTKTIETVEKLLEMAENFNLNINATGRIKSRIIHGTTQLLIEAQPHSEYSATVASVLFNNEDFVKLKEIMIKCTIWNTEHQKLLSNAERNILVEPLYNCLNNKN.

An HNH domain is found at 49-96 (CVYCECRLDEESKYMEVEHFLPKDTYPNLVVNWRNLLPSCKRCNGKKG).

Functionally, component of antiviral defense system Septu type I, composed of PtuA and PtuB. Expression of Septu type I in B.subtilis (strain BEST7003) confers resistance to phages SBSphiC and SBSphiJ. May be a nuclease. The chain is Septu protein PtuB from Bacillus thuringiensis.